The chain runs to 262 residues: Small ribosomal subunit protein uS2 (262 aa).

The protein belongs to the universal ribosomal protein uS2 family.

The sequence is that of Small ribosomal subunit protein uS2 from Azobacteroides pseudotrichonymphae genomovar. CFP2.